The primary structure comprises 157 residues: MRLWVLAIGSKMPAWVEAGVAEYSARMPPQLRVEWRGLPLARRGRSGDPVRWRREEGERILAATPAGAERIALEVNGRNLDSEALAQRIDTWFHSGRDVALWVGGPDGLDPALQPDWRWSLSPLTLAHPVVRVVLAEQLYRAWSIQAGLPYHRGGEE.

Residues Leu73, Gly104, and 121-126 (LSPLTL) contribute to the S-adenosyl-L-methionine site.

It belongs to the RNA methyltransferase RlmH family. In terms of assembly, homodimer.

The protein localises to the cytoplasm. The enzyme catalyses pseudouridine(1915) in 23S rRNA + S-adenosyl-L-methionine = N(3)-methylpseudouridine(1915) in 23S rRNA + S-adenosyl-L-homocysteine + H(+). Specifically methylates the pseudouridine at position 1915 (m3Psi1915) in 23S rRNA. In Acidithiobacillus ferrooxidans (strain ATCC 23270 / DSM 14882 / CIP 104768 / NCIMB 8455) (Ferrobacillus ferrooxidans (strain ATCC 23270)), this protein is Ribosomal RNA large subunit methyltransferase H.